The following is a 266-amino-acid chain: Putative pyruvate, phosphate dikinase regulatory protein (266 aa).

Glycine 149–threonine 156 provides a ligand contact to ADP.

The protein belongs to the pyruvate, phosphate/water dikinase regulatory protein family. PDRP subfamily.

The enzyme catalyses N(tele)-phospho-L-histidyl/L-threonyl-[pyruvate, phosphate dikinase] + ADP = N(tele)-phospho-L-histidyl/O-phospho-L-threonyl-[pyruvate, phosphate dikinase] + AMP + H(+). It carries out the reaction N(tele)-phospho-L-histidyl/O-phospho-L-threonyl-[pyruvate, phosphate dikinase] + phosphate + H(+) = N(tele)-phospho-L-histidyl/L-threonyl-[pyruvate, phosphate dikinase] + diphosphate. Functionally, bifunctional serine/threonine kinase and phosphorylase involved in the regulation of the pyruvate, phosphate dikinase (PPDK) by catalyzing its phosphorylation/dephosphorylation. The polypeptide is Putative pyruvate, phosphate dikinase regulatory protein (Halothermothrix orenii (strain H 168 / OCM 544 / DSM 9562)).